A 746-amino-acid polypeptide reads, in one-letter code: tRNA (cytosine(34)-C(5))-methyltransferase (746 aa).

Residues 1-30 are disordered; the sequence is MGRNQKQNFFAARKRQKRENGPKRTDRQAQ. A compositionally biased stretch (basic and acidic residues) spans 18-30; the sequence is RENGPKRTDRQAQ. Residues 184-190, Asp-216, Asp-243, and Asp-270 each bind S-adenosyl-L-methionine; that span reads CAAPGSK. The Nucleophile role is filled by Cys-323. 2 disordered regions span residues 454–475 and 701–746; these read QPAA…SVPW and SAEA…VATS. Residues 463-472 show a composition bias toward basic and acidic residues; sequence ADGKPIEEKS. The span at 704–714 shows a compositional bias: acidic residues; the sequence is AEADSSGDGDA. Positions 731 to 746 are enriched in polar residues; the sequence is AETTGTPMDTEVVATS.

It belongs to the class I-like SAM-binding methyltransferase superfamily. RsmB/NOP family. TRM4 subfamily. As to expression, ubiquitously expressed during embryonic development. Some enrichment is observed in the proventriculus area of the foregut and in the hindgut.

It is found in the nucleus. Its subcellular location is the nucleolus. The catalysed reaction is cytidine(34) in tRNA precursor + S-adenosyl-L-methionine = 5-methylcytidine(34) in tRNA precursor + S-adenosyl-L-homocysteine + H(+). Its function is as follows. RNA methyltransferase that methylates tRNAs. Methylates cytosine to 5-methylcytosine (m5C) at position 34 of intron-containing tRNA(Leu)(CAA) precursors. Required for short-term memory. This chain is tRNA (cytosine(34)-C(5))-methyltransferase, found in Drosophila melanogaster (Fruit fly).